Consider the following 486-residue polypeptide: N-succinylglutamate 5-semialdehyde dehydrogenase (486 aa).

220-225 (GSSRTG) contacts NAD(+). Catalysis depends on residues E243 and C277.

It belongs to the aldehyde dehydrogenase family. AstD subfamily.

It carries out the reaction N-succinyl-L-glutamate 5-semialdehyde + NAD(+) + H2O = N-succinyl-L-glutamate + NADH + 2 H(+). Its pathway is amino-acid degradation; L-arginine degradation via AST pathway; L-glutamate and succinate from L-arginine: step 4/5. Its function is as follows. Catalyzes the NAD-dependent reduction of succinylglutamate semialdehyde into succinylglutamate. The chain is N-succinylglutamate 5-semialdehyde dehydrogenase from Shewanella halifaxensis (strain HAW-EB4).